We begin with the raw amino-acid sequence, 209 residues long: uncharacterized protein (209 aa).

6 consecutive 4Fe-4S ferredoxin-type domains span residues 38–67 (KTKP…IFSF), 63–92 (KIFS…KDRF), 90–119 (DRFT…KEIP), 122–151 (KTPV…EINP), 145–174 (INKE…TPDE), and 179–209 (LIVK…HRES). Positions 47, 50, 53, 57, 72, 75, 78, 82, 99, 102, 105, and 109 each coordinate [4Fe-4S] cluster. [4Fe-4S] cluster-binding residues include Cys-154, Cys-157, Cys-160, Cys-164, Cys-188, Cys-191, Cys-194, and Cys-198.

This is an uncharacterized protein from Methanocaldococcus jannaschii (strain ATCC 43067 / DSM 2661 / JAL-1 / JCM 10045 / NBRC 100440) (Methanococcus jannaschii).